Reading from the N-terminus, the 248-residue chain is 3-deoxy-manno-octulosonate cytidylyltransferase (248 aa).

This sequence belongs to the KdsB family.

The protein resides in the cytoplasm. It catalyses the reaction 3-deoxy-alpha-D-manno-oct-2-ulosonate + CTP = CMP-3-deoxy-beta-D-manno-octulosonate + diphosphate. The protein operates within nucleotide-sugar biosynthesis; CMP-3-deoxy-D-manno-octulosonate biosynthesis; CMP-3-deoxy-D-manno-octulosonate from 3-deoxy-D-manno-octulosonate and CTP: step 1/1. Its pathway is bacterial outer membrane biogenesis; lipopolysaccharide biosynthesis. Its function is as follows. Activates KDO (a required 8-carbon sugar) for incorporation into bacterial lipopolysaccharide in Gram-negative bacteria. This Salmonella arizonae (strain ATCC BAA-731 / CDC346-86 / RSK2980) protein is 3-deoxy-manno-octulosonate cytidylyltransferase.